A 223-amino-acid chain; its full sequence is Putative nudix hydrolase 2 (223 aa).

Residues 72–213 (ASADGVSIIA…SIVVESTLLA (142 aa)) form the Nudix hydrolase domain. The short motif at 111–132 (GLIDAGETAQQAAIRELKEETG) is the Nudix box element. 2 residues coordinate Mg(2+): glutamate 126 and glutamate 130.

It belongs to the Nudix hydrolase family. The cofactor is Mg(2+). It depends on Mn(2+) as a cofactor.

Its function is as follows. Probably mediates the hydrolysis of some nucleoside diphosphate derivatives. The sequence is that of Putative nudix hydrolase 2 (ndx-2) from Caenorhabditis elegans.